Reading from the N-terminus, the 243-residue chain is tRNA pseudouridine synthase A (243 aa).

Asp53 serves as the catalytic Nucleophile. Tyr111 is a binding site for substrate.

Belongs to the tRNA pseudouridine synthase TruA family. As to quaternary structure, homodimer.

It catalyses the reaction uridine(38/39/40) in tRNA = pseudouridine(38/39/40) in tRNA. Functionally, formation of pseudouridine at positions 38, 39 and 40 in the anticodon stem and loop of transfer RNAs. This chain is tRNA pseudouridine synthase A, found in Chlorobium chlorochromatii (strain CaD3).